The primary structure comprises 273 residues: Ribosomal RNA small subunit methyltransferase A (273 aa).

Positions 18, 20, 45, 66, 91, and 113 each coordinate S-adenosyl-L-methionine.

The protein belongs to the class I-like SAM-binding methyltransferase superfamily. rRNA adenine N(6)-methyltransferase family. RsmA subfamily.

It is found in the cytoplasm. The catalysed reaction is adenosine(1518)/adenosine(1519) in 16S rRNA + 4 S-adenosyl-L-methionine = N(6)-dimethyladenosine(1518)/N(6)-dimethyladenosine(1519) in 16S rRNA + 4 S-adenosyl-L-homocysteine + 4 H(+). Its function is as follows. Specifically dimethylates two adjacent adenosines (A1518 and A1519) in the loop of a conserved hairpin near the 3'-end of 16S rRNA in the 30S particle. May play a critical role in biogenesis of 30S subunits. The chain is Ribosomal RNA small subunit methyltransferase A from Escherichia coli O139:H28 (strain E24377A / ETEC).